A 1732-amino-acid polypeptide reads, in one-letter code: Lys-gingipain W83 (1732 aa).

The N-terminal stretch at 1–24 is a signal peptide; the sequence is MRKLLLLIAASLLGVGLYAQSAKI. The propeptide occupies 25-228; the sequence is KLDAPTTRTT…ETAYKQLFNR (204 aa). 5 residues coordinate Ca(2+): Asp-313, Asp-337, Asp-339, Phe-341, and Glu-343. His-444 (proton donor) is an active-site residue. The active-site Nucleophile is Cys-477. Ca(2+) is bound by residues Phe-482 and Glu-491. The tract at residues 965–988 is disordered; that stretch reads DAPNGTPNPNPNPNPNPGTTLSES. A compositionally biased stretch (pro residues) spans 970–980; sequence TPNPNPNPNPN. Ca(2+) contacts are provided by Ser-988, Glu-990, Asp-1001, Asp-1003, Asp-1005, His-1007, Ser-1022, Gly-1024, Asn-1043, Asp-1146, Glu-1147, Asp-1433, Glu-1435, Asp-1446, Asp-1448, Asp-1450, Asn-1452, Ser-1470, Ile-1472, Asn-1490, and Asp-1595.

It belongs to the peptidase C25 family. In terms of processing, proteolytically cleaved into a catalytic subunit and three adhesins. Arg-gingipain is involved in this post-translational processing.

It localises to the secreted. It carries out the reaction Endopeptidase with strict specificity for lysyl bonds.. Cysteine proteinase with a strong preference for substrates with Lys in the P1 position. Hydrolyzes bovine hemoglobin, bovine serum albumin, casein, human placental type I collagen and human IgA and IgG. Disrupts the functions of polymorphonuclear leukocytes. May act as a virulence factor in the development of peridontal disease. Involved in the coaggregation of P.gingivalis with other oral bacteria. Has hemolytic activity; this is mediated by the adhesin domains and does not require the catalytic domain. This Porphyromonas gingivalis (Bacteroides gingivalis) protein is Lys-gingipain W83.